We begin with the raw amino-acid sequence, 65 residues long: pH-response transcription factor pacC/RIM101 (65 aa).

The C2H2-type 1 zinc finger occupies leucine 16–histidine 40. Residues histidine 46–valine 65 form a C2H2-type 2; degenerate zinc finger.

Belongs to the pacC/RIM101 family.

The protein localises to the nucleus. Transcription factor that mediates regulation of both acid- and alkaline-expressed genes in response to ambient pH. At alkaline ambient pH, activates transcription of alkaline-expressed genes (including pac1 itself) and represses transcription of acid-expressed genes. The protein is pH-response transcription factor pacC/RIM101 (pac1) of Colletotrichum gloeosporioides (Anthracnose fungus).